Consider the following 423-residue polypeptide: Tyrosine--tRNA ligase (423 aa).

An L-tyrosine-binding site is contributed by Y35. A 'HIGH' region motif is present at residues 40–49; it reads PTAPSLHAGH. Residues Y170 and Q174 each contribute to the L-tyrosine site. A 'KMSKS' region motif is present at residues 230–234; sequence KFGKS. Position 233 (K233) interacts with ATP. The 58-residue stretch at 355–412 folds into the S4 RNA-binding domain; sequence DLITDLLVATGLSASKGAARRTIAEGGVSVNNMKIDSDEWTPQASDFLHGRWLVLRRG.

It belongs to the class-I aminoacyl-tRNA synthetase family. TyrS type 1 subfamily. Homodimer.

It is found in the cytoplasm. The catalysed reaction is tRNA(Tyr) + L-tyrosine + ATP = L-tyrosyl-tRNA(Tyr) + AMP + diphosphate + H(+). Catalyzes the attachment of tyrosine to tRNA(Tyr) in a two-step reaction: tyrosine is first activated by ATP to form Tyr-AMP and then transferred to the acceptor end of tRNA(Tyr). The sequence is that of Tyrosine--tRNA ligase from Mycobacterium sp. (strain KMS).